Here is a 181-residue protein sequence, read N- to C-terminus: Heavy metal-associated isoprenylated plant protein 46 (181 aa).

Positions 2–71 (KQKILIRVTM…KVAFAELVSV (70 aa)) constitute an HMA domain. Residues 74–121 (VEPPKKEDEKKGGDGKGAEGKGGDQKGGDKKGPDDKEPPEPKPVPCYP) form a disordered region. The span at 75 to 113 (EPPKKEDEKKGGDGKGAEGKGGDQKGGDKKGPDDKEPPE) shows a compositional bias: basic and acidic residues. Cysteine 178 is modified (cysteine methyl ester). Cysteine 178 carries S-farnesyl cysteine lipidation. Positions 179-181 (KIM) are cleaved as a propeptide — removed in mature form.

This sequence belongs to the HIPP family.

Its function is as follows. Probable heavy-metal-binding protein. The polypeptide is Heavy metal-associated isoprenylated plant protein 46 (Arabidopsis thaliana (Mouse-ear cress)).